A 189-amino-acid chain; its full sequence is Early E3 20.5 kDa glycoprotein (189 aa).

N-linked (GlcNAc...) asparagine; by host glycosylation is found at N73 and N137.

It belongs to the adenoviridae E3_20 family.

Functionally, E3 proteins seem to be dispensable for virus growth in tissue culture cells. They are potentially important for virus growth under special conditions; E3 region may help adenoviruses to evade the immune surveillance of the host. The chain is Early E3 20.5 kDa glycoprotein from Human adenovirus B serotype 3 (HAdV-3).